Consider the following 130-residue polypeptide: Small ribosomal subunit protein uS9 (130 aa).

Belongs to the universal ribosomal protein uS9 family.

The chain is Small ribosomal subunit protein uS9 from Hydrogenovibrio crunogenus (strain DSM 25203 / XCL-2) (Thiomicrospira crunogena).